A 250-amino-acid chain; its full sequence is Triosephosphate isomerase (250 aa).

Substrate is bound at residue 9–11 (NWK). Catalysis depends on His95, which acts as the Electrophile. Residue Glu167 is the Proton acceptor of the active site. Residues Gly173, Ser212, and 233–234 (GG) each bind substrate.

This sequence belongs to the triosephosphate isomerase family. As to quaternary structure, homodimer.

It localises to the cytoplasm. It carries out the reaction D-glyceraldehyde 3-phosphate = dihydroxyacetone phosphate. The protein operates within carbohydrate biosynthesis; gluconeogenesis. It functions in the pathway carbohydrate degradation; glycolysis; D-glyceraldehyde 3-phosphate from glycerone phosphate: step 1/1. Functionally, involved in the gluconeogenesis. Catalyzes stereospecifically the conversion of dihydroxyacetone phosphate (DHAP) to D-glyceraldehyde-3-phosphate (G3P). This is Triosephosphate isomerase from Nitrosococcus oceani (strain ATCC 19707 / BCRC 17464 / JCM 30415 / NCIMB 11848 / C-107).